An 86-amino-acid chain; its full sequence is Large ribosomal subunit protein bL27c (86 aa).

A disordered region spans residues 1–27 (MAHKKGSGSTRNGRDSNSKRLGVKKYG).

This sequence belongs to the bacterial ribosomal protein bL27 family.

The protein localises to the plastid. Its subcellular location is the chloroplast. The polypeptide is Large ribosomal subunit protein bL27c (rpl27) (Porphyra purpurea (Red seaweed)).